A 910-amino-acid polypeptide reads, in one-letter code: MSRFFANGSESESESSEEEIQATNFNKASAFQFSDDEEEVKRVVRSTKEKRYENLTSIIKTIRNHKKIKDIPNTLSSFEDLTRAYQKALPVISKEENGITPRFYIRCLAELEDFINEVWEDREGRKNLSKNNSKSLGTLRQKVRKYIKDFEDDLSRFREAPDQESEAEDEVVALESDGGDAGDDSDAGVKPTEAVPKAVKSAPAKAAPADDDDSDDSIDWDSDSESETESSDDENQYQNMRERFLKRTTEKEEKDDDKRKDKRKEQKTKIRKRAEDDEDGEWETVVKGHVVEKPKMFEKDAEIDVPLVLAKLLEIMSARGKKRTDRRLQIDLLFELRDISDQHNLGTAVSVKIHFNIISAIYDYNQKISEPMKLEHWALLLEVMQSMMKLLLANADIIMSESVAEEHEEYATSPFYVRGCPLAAVERLDDEFVKLLKECDPHSNDYVSRLKDEVNVVKTIELVLQYFERSGTNNERCRIYLRKIEHLYYKFDPEVLKKKRGELPATTSTSVDVMDKLCKFIYAKDDTDRIRTRAILAHIYHHAMHDNWFQARDLVLMSHLQDNIDAADPATRILYNRMMANLGLCAFRQGNVKDAHHCLVDLMVTGKPKELLAQGLLPQRQHERSAEQEKIEKQRQMPFHMHINLELLECVYLVSAMLLEIPYIAAHEFDARRRMISKTFYQQLRSSERQSLVGPPESMREHVVAAAKAMRCGNWQACANFIVNKKMNTKVWDLFYESDRVREMLTKFIKEESLRTYLFTYSNVYTSISIPSLAQMYELPVPKVHSIISKMIINEELMASLDDPSETVGMHRSEPSRLQALAMQFVDKVTNLVDVNEKVFDMKQGNFFQRGNMGNRGDRGYNRNQNNQGGNWLGQRRDRNNRNRNQRGHHKNNQDRQQQQQQQVQTIDEE.

The tract at residues 1–21 (MSRFFANGSESESESSEEEIQ) is disordered. Over residues 11–20 (SESESSEEEI) the composition is skewed to acidic residues. A phosphoserine mark is found at Ser34, Ser165, Ser176, and Ser185. Residues 157–279 (FREAPDQESE…IRKRAEDDED (123 aa)) form a disordered region. Over residues 162–186 (DQESEAEDEVVALESDGGDAGDDSD) the composition is skewed to acidic residues. Residues 194–207 (AVPKAVKSAPAKAA) show a composition bias toward low complexity. Positions 209 to 235 (ADDDDSDDSIDWDSDSESETESSDDEN) are enriched in acidic residues. Positions 240 to 268 (MRERFLKRTTEKEEKDDDKRKDKRKEQKT) are enriched in basic and acidic residues. The region spanning 639 to 815 (FHMHINLELL…ETVGMHRSEP (177 aa)) is the PCI domain. Positions 847-910 (FFQRGNMGNR…QQQVQTIDEE (64 aa)) are disordered. Low complexity predominate over residues 862-874 (NRNQNNQGGNWLG). The span at 882–891 (RNRNQRGHHK) shows a compositional bias: basic residues. A compositionally biased stretch (low complexity) spans 895-910 (DRQQQQQQQVQTIDEE).

It belongs to the eIF-3 subunit C family. As to quaternary structure, component of the eukaryotic translation initiation factor 3 (eIF-3) complex. The eIF-3 complex interacts with pix.

Its subcellular location is the cytoplasm. Its function is as follows. Component of the eukaryotic translation initiation factor 3 (eIF-3) complex, which is involved in protein synthesis of a specialized repertoire of mRNAs and, together with other initiation factors, stimulates binding of mRNA and methionyl-tRNAi to the 40S ribosome. The eIF-3 complex specifically targets and initiates translation of a subset of mRNAs involved in cell proliferation. This Drosophila melanogaster (Fruit fly) protein is Eukaryotic translation initiation factor 3 subunit C.